Consider the following 330-residue polypeptide: Phosphate acyltransferase (330 aa).

It belongs to the PlsX family. As to quaternary structure, homodimer. Probably interacts with PlsY.

It is found in the cytoplasm. The enzyme catalyses a fatty acyl-[ACP] + phosphate = an acyl phosphate + holo-[ACP]. It functions in the pathway lipid metabolism; phospholipid metabolism. Its function is as follows. Catalyzes the reversible formation of acyl-phosphate (acyl-PO(4)) from acyl-[acyl-carrier-protein] (acyl-ACP). This enzyme utilizes acyl-ACP as fatty acyl donor, but not acyl-CoA. The chain is Phosphate acyltransferase from Lysinibacillus sphaericus (strain C3-41).